Here is a 219-residue protein sequence, read N- to C-terminus: MNQRGEAPISVIKRLPVYLRVLDNLVKRDIEVVSSKSLSKETGFTAEQIRKDLAFFGAFGTRGTGYNTNYLRERVLRIIGLDKQTNVAIVGAGHLGTAFARYNVRENPYTSVVGLFDVSPDIVGENIEGVPVYHLNDLQEIVRKERVQVGVITVPAVHAQEVVDRLVEENVKALLNFAPAKLTAPEDVRIHNVDLTIELQSLIYFAKDELNEESTQDLE.

The segment at residues 17-56 (VYLRVLDNLVKRDIEVVSSKSLSKETGFTAEQIRKDLAFF) is a DNA-binding region (H-T-H motif). 91–96 (GAGHLG) contacts NAD(+).

Belongs to the transcriptional regulatory Rex family. Homodimer.

Its subcellular location is the cytoplasm. In terms of biological role, modulates transcription in response to changes in cellular NADH/NAD(+) redox state. This chain is Redox-sensing transcriptional repressor Rex, found in Natranaerobius thermophilus (strain ATCC BAA-1301 / DSM 18059 / JW/NM-WN-LF).